We begin with the raw amino-acid sequence, 317 residues long: Acetyl-coenzyme A carboxylase carboxyl transferase subunit beta (317 aa).

The 270-residue stretch at L30–K299 folds into the CoA carboxyltransferase N-terminal domain. Positions 34, 37, 53, and 56 each coordinate Zn(2+). The C4-type zinc-finger motif lies at C34–C56.

This sequence belongs to the AccD/PCCB family. As to quaternary structure, acetyl-CoA carboxylase is a heterohexamer composed of biotin carboxyl carrier protein (AccB), biotin carboxylase (AccC) and two subunits each of ACCase subunit alpha (AccA) and ACCase subunit beta (AccD). It depends on Zn(2+) as a cofactor.

Its subcellular location is the cytoplasm. It carries out the reaction N(6)-carboxybiotinyl-L-lysyl-[protein] + acetyl-CoA = N(6)-biotinyl-L-lysyl-[protein] + malonyl-CoA. It functions in the pathway lipid metabolism; malonyl-CoA biosynthesis; malonyl-CoA from acetyl-CoA: step 1/1. Component of the acetyl coenzyme A carboxylase (ACC) complex. Biotin carboxylase (BC) catalyzes the carboxylation of biotin on its carrier protein (BCCP) and then the CO(2) group is transferred by the transcarboxylase to acetyl-CoA to form malonyl-CoA. This chain is Acetyl-coenzyme A carboxylase carboxyl transferase subunit beta, found in Crocosphaera subtropica (strain ATCC 51142 / BH68) (Cyanothece sp. (strain ATCC 51142)).